A 49-amino-acid chain; its full sequence is Large ribosomal subunit protein bL33A (49 aa).

The protein belongs to the bacterial ribosomal protein bL33 family.

In Latilactobacillus sakei subsp. sakei (strain 23K) (Lactobacillus sakei subsp. sakei), this protein is Large ribosomal subunit protein bL33A.